Reading from the N-terminus, the 428-residue chain is Ribulose bisphosphate carboxylase (428 aa).

Lysine 151 functions as the Proton acceptor in the catalytic mechanism. Residue lysine 153 coordinates substrate. Lysine 177, aspartate 179, and glutamate 180 together coordinate Mg(2+). Lysine 177 carries the post-translational modification N6-carboxylysine. Histidine 270 acts as the Proton acceptor in catalysis. Substrate-binding positions include arginine 271, histidine 303, serine 354–glycine 356, and glutamine 376–glycine 379.

The protein belongs to the RuBisCO large chain family. Type III subfamily. In terms of assembly, homodimer or homodecamer. In contrast to form I RuBisCO, the form III RuBisCO is composed solely of large subunits. Requires Mg(2+) as cofactor.

It carries out the reaction 2 (2R)-3-phosphoglycerate + 2 H(+) = D-ribulose 1,5-bisphosphate + CO2 + H2O. The catalysed reaction is D-ribulose 1,5-bisphosphate + O2 = 2-phosphoglycolate + (2R)-3-phosphoglycerate + 2 H(+). Functionally, catalyzes the addition of molecular CO(2) and H(2)O to ribulose 1,5-bisphosphate (RuBP), generating two molecules of 3-phosphoglycerate (3-PGA). Functions in an archaeal AMP degradation pathway, together with AMP phosphorylase and R15P isomerase. This Methanosarcina barkeri (strain Fusaro / DSM 804) protein is Ribulose bisphosphate carboxylase.